The chain runs to 129 residues: MARRTNTRKRRVRKNIDTGIAHIRSTFNNTIVTITDVHGNALAWASAGSLGFKGSRKSTPFAAQMAAEAAAKASMEHGMKTVEVNVKGPGAGREAAIRALQAAGLEITAIKDVTPIPHDGCRPPKRRRV.

It belongs to the universal ribosomal protein uS11 family. Part of the 30S ribosomal subunit. Interacts with proteins S7 and S18. Binds to IF-3.

Located on the platform of the 30S subunit, it bridges several disparate RNA helices of the 16S rRNA. Forms part of the Shine-Dalgarno cleft in the 70S ribosome. This Geobacillus stearothermophilus (Bacillus stearothermophilus) protein is Small ribosomal subunit protein uS11.